A 317-amino-acid polypeptide reads, in one-letter code: Beta-ketoacyl-[acyl-carrier-protein] synthase III (317 aa).

Active-site residues include Cys112 and His244. Residues 245–249 (QANIR) are ACP-binding. Asn274 is an active-site residue.

Belongs to the thiolase-like superfamily. FabH family. As to quaternary structure, homodimer.

It localises to the cytoplasm. The catalysed reaction is malonyl-[ACP] + acetyl-CoA + H(+) = 3-oxobutanoyl-[ACP] + CO2 + CoA. The protein operates within lipid metabolism; fatty acid biosynthesis. Its function is as follows. Catalyzes the condensation reaction of fatty acid synthesis by the addition to an acyl acceptor of two carbons from malonyl-ACP. Catalyzes the first condensation reaction which initiates fatty acid synthesis and may therefore play a role in governing the total rate of fatty acid production. Possesses both acetoacetyl-ACP synthase and acetyl transacylase activities. Its substrate specificity determines the biosynthesis of branched-chain and/or straight-chain of fatty acids. This chain is Beta-ketoacyl-[acyl-carrier-protein] synthase III, found in Rickettsia prowazekii (strain Madrid E).